The following is a 197-amino-acid chain: Negative modulator of initiation of replication (197 aa).

Interaction with DNA regions lie at residues 100–101, 129–133, and 163–169; these read AV, RTRVY, and NTNSGRK.

This sequence belongs to the SeqA family. As to quaternary structure, homodimer. Polymerizes to form helical filaments.

It localises to the cytoplasm. Functionally, negative regulator of replication initiation, which contributes to regulation of DNA replication and ensures that replication initiation occurs exactly once per chromosome per cell cycle. Binds to pairs of hemimethylated GATC sequences in the oriC region, thus preventing assembly of replication proteins and re-initiation at newly replicated origins. Repression is relieved when the region becomes fully methylated. The sequence is that of Negative modulator of initiation of replication from Haemophilus influenzae (strain ATCC 51907 / DSM 11121 / KW20 / Rd).